Reading from the N-terminus, the 256-residue chain is Phosphatidylglycerol--prolipoprotein diacylglyceryl transferase 2 (256 aa).

The next 3 membrane-spanning stretches (helical) occupy residues 11–31 (LKIYSYGFMIGLGIICATLLF), 46–66 (FNATILTVISGILGGKILYII), and 83–103 (FGNGFVIYGAIIGGALGIALC). Arginine 130 contacts a 1,2-diacyl-sn-glycero-3-phospho-(1'-sn-glycerol). A run of 3 helical transmembrane segments spans residues 142–162 (AETTSSIGIIFPADSLAPAGV), 164–184 (LYPTQIFSSIFDFALGLFLLW), and 221–241 (VGLLSTSQFISIFILIGGILL).

Belongs to the Lgt family.

The protein localises to the cell membrane. It carries out the reaction L-cysteinyl-[prolipoprotein] + a 1,2-diacyl-sn-glycero-3-phospho-(1'-sn-glycerol) = an S-1,2-diacyl-sn-glyceryl-L-cysteinyl-[prolipoprotein] + sn-glycerol 1-phosphate + H(+). Its pathway is protein modification; lipoprotein biosynthesis (diacylglyceryl transfer). In terms of biological role, catalyzes the transfer of the diacylglyceryl group from phosphatidylglycerol to the sulfhydryl group of the N-terminal cysteine of a prolipoprotein, the first step in the formation of mature lipoproteins. This Clostridium perfringens (strain 13 / Type A) protein is Phosphatidylglycerol--prolipoprotein diacylglyceryl transferase 2.